The following is a 488-amino-acid chain: Glutamyl-tRNA(Gln) amidotransferase subunit A (488 aa).

Residues Lys77 and Ser152 each act as charge relay system in the active site. Ser176 acts as the Acyl-ester intermediate in catalysis.

It belongs to the amidase family. GatA subfamily. In terms of assembly, heterotrimer of A, B and C subunits.

It carries out the reaction L-glutamyl-tRNA(Gln) + L-glutamine + ATP + H2O = L-glutaminyl-tRNA(Gln) + L-glutamate + ADP + phosphate + H(+). Allows the formation of correctly charged Gln-tRNA(Gln) through the transamidation of misacylated Glu-tRNA(Gln) in organisms which lack glutaminyl-tRNA synthetase. The reaction takes place in the presence of glutamine and ATP through an activated gamma-phospho-Glu-tRNA(Gln). The chain is Glutamyl-tRNA(Gln) amidotransferase subunit A from Streptococcus agalactiae serotype III (strain NEM316).